We begin with the raw amino-acid sequence, 804 residues long: Ribonucleoside-diphosphate reductase large subunit-like protein (804 aa).

Belongs to the ribonucleoside diphosphate reductase large chain family. As to quaternary structure, the genome of human herpesvirus-6 does not code for a ribonucleotide reductase small subunit.

It is found in the virion. The protein resides in the host cytoplasm. Its function is as follows. Does not possess a ribonucleotide reductase activity. Betaherpesviruses probably use another strategy to expand the dNTP pool in a quiescent host cell. The sequence is that of Ribonucleoside-diphosphate reductase large subunit-like protein from Human herpesvirus 6B (strain Z29) (HHV-6 variant B).